Consider the following 156-residue polypeptide: Ribosome maturation factor RimP (156 aa).

The protein belongs to the RimP family.

The protein resides in the cytoplasm. Its function is as follows. Required for maturation of 30S ribosomal subunits. The chain is Ribosome maturation factor RimP from Halalkalibacterium halodurans (strain ATCC BAA-125 / DSM 18197 / FERM 7344 / JCM 9153 / C-125) (Bacillus halodurans).